We begin with the raw amino-acid sequence, 297 residues long: Acetylglutamate kinase (297 aa).

Substrate contacts are provided by residues 70-71 (GG), R92, and N194.

This sequence belongs to the acetylglutamate kinase family. ArgB subfamily.

Its subcellular location is the cytoplasm. The catalysed reaction is N-acetyl-L-glutamate + ATP = N-acetyl-L-glutamyl 5-phosphate + ADP. The protein operates within amino-acid biosynthesis; L-arginine biosynthesis; N(2)-acetyl-L-ornithine from L-glutamate: step 2/4. Functionally, catalyzes the ATP-dependent phosphorylation of N-acetyl-L-glutamate. The sequence is that of Acetylglutamate kinase from Janthinobacterium sp. (strain Marseille) (Minibacterium massiliensis).